The following is a 352-amino-acid chain: MGHCTSKDQKEGKRLNRRIDEQIKKDQSMSLRIIKLLLLGAGESGKSTILKQMRILHKDGFSQQDLEMIRPVVYSNCIHSMLSILRAMFHLQIEYGEPDRVRDSQLVFATVHANKEELTEELAQAMQRLWHDPGVRECYRRSNEYQIDDSAKYFLDNLPRLSSPSYVPSEQDLLRTRIKTTGITEVLFELKGLTFRVIDVGGQRSERKKWIHCFDNVNAIIFISSLSEYDQTLREDNCTNRMQESLKLFDSICNSPWFADIHFILFLNKKDLFAEKIVRSPLTVCFPEYKGQQNQTECINYIQWKFEQLNRSSQREIYCHHTCATDTNNVQFVLDACLDMIIAKNLKSMGLC.

A lipid anchor (N-myristoyl glycine) is attached at Gly-2. A lipid anchor (S-palmitoyl cysteine) is attached at Cys-4. Positions Arg-32 to Cys-352 constitute a G-alpha domain. The segment at Lys-35–Thr-48 is G1 motif. GTP-binding positions include Gly-40–Ser-47, Leu-174–Thr-180, Asp-199–Gln-203, Asn-268–Asp-271, and Ala-324. Ser-47 and Thr-180 together coordinate Mg(2+). The interval Asp-172–Thr-180 is G2 motif. Positions Phe-195–Arg-204 are G3 motif. The segment at Ile-264–Asp-271 is G4 motif. The tract at residues Thr-322–Thr-327 is G5 motif.

It belongs to the G-alpha family. G(i/o/t/z) subfamily. As to quaternary structure, g proteins are composed of 3 units; alpha, beta and gamma. The alpha chain contains the guanine nucleotide binding site.

Its function is as follows. Guanine nucleotide-binding proteins (G proteins) are involved as modulators or transducers in various transmembrane signaling systems. The sequence is that of Guanine nucleotide-binding protein alpha-7 subunit (gpa-7) from Caenorhabditis briggsae.